The chain runs to 186 residues: MAVEIPNKEQILADWEAHPMRRPRIEKVTINIGVGESGERLTKAEIMLQQLTGQKPIRRKAKKTNRDFGIRRGEPIAVKVTLRGPKAYELLKRLLAAVDNRLKASSFDEHGNVCFGIEEHINIPGVEYDPEIGIFGMDVCVTLERPGFRVARRKRKRAKIPTRHKLTKEEGMVYMMEEFGVEIVEG.

Belongs to the universal ribosomal protein uL5 family. Part of the 50S ribosomal subunit; contacts the 5S rRNA and probably tRNA. Forms a bridge to the 30S subunit in the 70S ribosome.

Its function is as follows. This is one of the proteins that bind and probably mediate the attachment of the 5S RNA into the large ribosomal subunit, where it forms part of the central protuberance. In the 70S ribosome it contacts protein S13 of the 30S subunit (bridge B1b), connecting the 2 subunits; this bridge is implicated in subunit movement. May contact the P site tRNA; the 5S rRNA and some of its associated proteins might help stabilize positioning of ribosome-bound tRNAs. This Pyrococcus furiosus (strain ATCC 43587 / DSM 3638 / JCM 8422 / Vc1) protein is Large ribosomal subunit protein uL5.